We begin with the raw amino-acid sequence, 228 residues long: Translin (228 aa).

The tract at residues Arg-86 to His-90 is DNA/RNA binding. The leucine-zipper stretch occupies residues Leu-177–Leu-198. Position 187 is an N6-acetyllysine (Lys-187). At Ser-190 the chain carries Phosphoserine. Position 199 is an N6-acetyllysine (Lys-199).

This sequence belongs to the translin family. As to quaternary structure, ring-shaped heterooctamer of six TSN and two TSNAX subunits, DNA/RNA binding occurs inside the ring.

Its subcellular location is the cytoplasm. The protein resides in the nucleus. DNA-binding protein that specifically recognizes consensus sequences at the breakpoint junctions in chromosomal translocations, mostly involving immunoglobulin (Ig)/T-cell receptor gene segments. Seems to recognize single-stranded DNA ends generated by staggered breaks occurring at recombination hot spots. In terms of biological role, exhibits both single-stranded and double-stranded endoribonuclease activity. May act as an activator of RNA-induced silencing complex (RISC) by facilitating endonucleolytic cleavage of the siRNA passenger strand. This is Translin from Homo sapiens (Human).